Here is a 676-residue protein sequence, read N- to C-terminus: MEAHLANETKHALWHNDHTKGLLHVVIPNAGLIAAGIDPALLILKKPGQRFKVEVQTRYHATGQCEPWCQVFAAYIPDNALTNLLIPKTEPFVSHVFSATHNSGGLILSLPVYLSPGLFFDAFNVVAIRINTGNRKHRDICIMYAELIPNGTRYFADGQRVLLLCKQLIAYIRCTPRLASSIKIYAEHMVAAMGESHTSNGDNIGPVSSIIDLDRQLTSGGIDDSPAETRIQENNRDVLELIKRAVNIVNSRHPVRPSSSRVASGLLQSAKGHGAQTSNTDPINNGSFDGVLEPPGQGRFTGKKNNSSASIPPLQDVLLFTPASTEPQSLMEWFDICYAQLVSGDTPADFWKRRPLSIVPRHYAESPSPLIVVSYNGSSAWGGRITGSPILYHSAQAIIDAACINARVDNPQSLHVTARQELVARLPFLANVLNNQTPLPAFKPGAEMFLNQVFKQACVTSLTQGLITELQTNPTLQQLMEYDIADSSQTVIDEIVARTPDLIQTIVSVLTEMSMDAFYNSSLMYAVLAYLSSVYTRPQGGGYIPYLHASFPCWLGNRSIYLFDYYNSGGEILKLSKVPVPVALEKVGIGNSTQLRGKFIRSADIVDIGICSKYLPGQCYAYICLGFNQQLQSILVLPGGFAACFCITDTLQAALPASLIGPILDRFCFSIPNPHK.

A compositionally biased stretch (low complexity) spans 253–264 (HPVRPSSSRVAS). The interval 253-308 (HPVRPSSSRVASGLLQSAKGHGAQTSNTDPINNGSFDGVLEPPGQGRFTGKKNNSS) is disordered. Residues 275–287 (AQTSNTDPINNGS) are compositionally biased toward polar residues.

Belongs to the herpesviridae CVC1 protein family. In terms of assembly, interacts (via C-terminus) with capsid vertex component 2/CVC2.

It localises to the virion. It is found in the host nucleus. Functionally, capsid vertex-specific component that plays a role during viral DNA encapsidation, assuring correct genome cleavage and presumably stabilizing capsids that contain full-length viral genomes. The polypeptide is Capsid vertex component 1 (Varicella-zoster virus (strain Dumas) (HHV-3)).